The following is a 1269-amino-acid chain: Pre-mRNA-splicing factor RSE1 (1269 aa).

Belongs to the RSE1 family. In terms of assembly, associated with the spliceosome.

Its subcellular location is the nucleus. Involved in pre-mRNA splicing and cell cycle control. The sequence is that of Pre-mRNA-splicing factor RSE1 (RSE1) from Kluyveromyces lactis (strain ATCC 8585 / CBS 2359 / DSM 70799 / NBRC 1267 / NRRL Y-1140 / WM37) (Yeast).